The following is a 165-amino-acid chain: Ribosomal RNA large subunit methyltransferase H (165 aa).

Gly-109 provides a ligand contact to S-adenosyl-L-methionine.

It belongs to the RNA methyltransferase RlmH family. Homodimer.

Its subcellular location is the cytoplasm. It catalyses the reaction pseudouridine(1915) in 23S rRNA + S-adenosyl-L-methionine = N(3)-methylpseudouridine(1915) in 23S rRNA + S-adenosyl-L-homocysteine + H(+). Functionally, specifically methylates the pseudouridine at position 1915 (m3Psi1915) in 23S rRNA. In Methylorubrum extorquens (strain CM4 / NCIMB 13688) (Methylobacterium extorquens), this protein is Ribosomal RNA large subunit methyltransferase H.